The primary structure comprises 114 residues: Large ribosomal subunit protein uL22 (114 aa).

It belongs to the universal ribosomal protein uL22 family. In terms of assembly, part of the 50S ribosomal subunit.

In terms of biological role, this protein binds specifically to 23S rRNA; its binding is stimulated by other ribosomal proteins, e.g. L4, L17, and L20. It is important during the early stages of 50S assembly. It makes multiple contacts with different domains of the 23S rRNA in the assembled 50S subunit and ribosome. The globular domain of the protein is located near the polypeptide exit tunnel on the outside of the subunit, while an extended beta-hairpin is found that lines the wall of the exit tunnel in the center of the 70S ribosome. The sequence is that of Large ribosomal subunit protein uL22 from Lysinibacillus sphaericus (strain C3-41).